Consider the following 480-residue polypeptide: MLFRNRFLLLLALAALLAFVSLSLQFFHLIPVSTPKNGMSSKSRKRIMPDPVTEPPVTDPVYEALLYCNIPSVAERSMEGHAPHHFKLVSVHVFIRHGDRYPLYVIPKTKRPEIDCTLVANRKPYHPKLEAFISHMSKGSGASFESPLNSLPLYPNHPLCEMGELTQTGVVQHLQNGQLLRDIYLKKHKLLPNDWSADQLYLETTGKSRTLQSGLALLYGFLPDFDWKKIYFRHQPSALFCSGSCYCPVRNQYLEKEQRRQYLLRLKNSQLEKTYGEMAKIVDVPTKQLRAANPIDSMLCHFCHNVSFPCTRNGCVDMEHFKVIKTHQIEDERERREKKLYFGYSLLGAHPILNQTIGRMQRATEGRKEELFALYSAHDVTLSPVLSALGLSEARFPRFAARLIFELWQDREKPSEHSVRILYNGVDVTFHTSFCQDHHKRSPKPMCPLENLVRFVKRDMFVALGGSGTNYYDACHREGF.

Over 1 to 6 (MLFRNR) the chain is Cytoplasmic. Residues 7 to 27 (FLLLLALAALLAFVSLSLQFF) traverse the membrane as a helical; Signal-anchor for type II membrane protein segment. The Lumenal segment spans residues 28-480 (HLIPVSTPKN…YYDACHREGF (453 aa)). Histidine 97 acts as the Nucleophile in catalysis. Asparagine 305 and asparagine 354 each carry an N-linked (GlcNAc...) asparagine glycan. Aspartate 379 (proton donor) is an active-site residue.

This sequence belongs to the histidine acid phosphatase family. As to quaternary structure, interacts with B3GAT3; the interaction increases the 2-phosphoxylose phosphatase activity of PXYLP1 during completion of linkage region formation in a B3GAT3-mediated manner. Widely expressed. Strongly expressed in spleen, fetal liver, moderately in placenta, pancreas, kidney, thymus and colon.

The protein localises to the golgi apparatus membrane. It catalyses the reaction 3-O-[beta-D-GlcA-(1-&gt;3)-beta-D-Gal-(1-&gt;3)-beta-D-Gal-(1-&gt;4)-beta-D-2-O-P-Xyl]-L-seryl-[protein] + H2O = 3-O-(beta-D-GlcA-(1-&gt;3)-beta-D-Gal-(1-&gt;3)-beta-D-Gal-(1-&gt;4)-beta-D-Xyl)-L-seryl-[protein] + phosphate. Responsible for the 2-O-dephosphorylation of xylose in the glycosaminoglycan-protein linkage region of proteoglycans thereby regulating the amount of mature glycosaminoglycan (GAG) chains. Sulfated glycosaminoglycans (GAGs), including heparan sulfate and chondroitin sulfate, are synthesized on the so-called common GAG-protein linkage region (GlcUAbeta1-3Galbeta1-3Galbeta1-4Xylbeta1-O-Ser) of core proteins, which is formed by the stepwise addition of monosaccharide residues by the respective specific glycosyltransferases. Xylose 2-O-dephosphorylation during completion of linkage region formation is a prerequisite for the initiation and efficient elongation of the repeating disaccharide region of GAG chains. The polypeptide is 2-phosphoxylose phosphatase 1 (Homo sapiens (Human)).